The following is a 426-amino-acid chain: MAGLGFWGHPAGPLLLLLLLVLPPRALPEGPLVFVALVFRHGDRAPLASYPMDPHKEVASTLWPRGLGQLTTEGVRQQLELGRFLRSRYEAFLSPEYRREEVYIRSTDFDRTLESAQANLAGLFPEAAPGSPEARWRPIPVHTVPVAEDKLLRFPMRSCPRYHELLREATEAAEYQEALEGWTGFLSRLENFTGLSLVGEPLRRAWKVLDTLMCQQAHGLPLPAWASPDVLRTLAQISALDIGAHVGPPRAAEKAQLTGGILLNAILANFSRVQRLGLPLKMVMYSAHDSTLLALQGALGLYDGHTPPYAACLGFEFRKHLGNPAKDGGNVTVSLFYRNDSAHLPLPLSLPGCPAPCPLGRFYQLTAPARPPAHGVSCHGPYEAAIPPAPVVPLLAGAVAVLVALSLGLGLLAWRPGCLRALGGPV.

An N-terminal signal peptide occupies residues 1–26; that stretch reads MAGLGFWGHPAGPLLLLLLLVLPPRA. Residues 27-393 are Extracellular-facing; that stretch reads LPEGPLVFVA…AAIPPAPVVP (367 aa). H41 functions as the Nucleophile in the catalytic mechanism. 3 disulfide bridges follow: C159–C378, C214–C312, and C353–C357. N-linked (GlcNAc...) asparagine glycans are attached at residues N191 and N269. D289 acts as the Proton donor in catalysis. 2 N-linked (GlcNAc...) asparagine glycosylation sites follow: N330 and N339. A helical membrane pass occupies residues 394–414; it reads LLAGAVAVLVALSLGLGLLAW. Topologically, residues 415 to 426 are cytoplasmic; that stretch reads RPGCLRALGGPV.

The protein belongs to the histidine acid phosphatase family. In terms of assembly, homodimer. Post-translationally, glycosylated. As to expression, expressed mainly in the testis. Also expressed in the brain where they are enriched at the postsynaptic sites. Expressed at lower levels in the trachea, prostate, bone marrow, spinal cord, colon, fetal brain, heart, thymus, fetal liver, spleen, leukocytes, ovary, small intestine, pancreas and skeletal muscle. Expression is significantly lower in testicular cancer tissues than in normal testicular tissues. Isoform 3 is expressed in the testis, trachea, prostate and bone marrow.

The protein localises to the membrane. It carries out the reaction a phosphate monoester + H2O = an alcohol + phosphate. In terms of biological role, may dephosphorylate receptor tyrosine-protein kinase ERBB4 and inhibits its ligand-induced proteolytic cleavage. May play a role in odontogenesis. This Homo sapiens (Human) protein is Testicular acid phosphatase.